A 71-amino-acid chain; its full sequence is Small ribosomal subunit protein bS21 (71 aa).

It belongs to the bacterial ribosomal protein bS21 family.

The sequence is that of Small ribosomal subunit protein bS21 from Alteromonas mediterranea (strain DSM 17117 / CIP 110805 / LMG 28347 / Deep ecotype).